The chain runs to 308 residues: MGDDLFKEARKERDDFEELMNACDLAKMSVKNNEMVHGLETFGVNHGESSSENKPTEIMKVVAPTVEAYVGSSSSTTVTKPSGGAVDGIDQKEVRQDGTSVQKDDNGFIFYKCRFCGLTFNFMNTLRAHERIHDVSQPYVCGKCGESYEFACQLEYHAAQHSEIDGFKCDCGRTFFSYTEMLYHKHTDDPIELIGAPETTTVLVNKKKIIPVTEQDLPQPAFVTEGYEPKHPLRVYSDVRSKPYICEYCSKSYSDSRGLAYHMYSHRGEKQFNPRASRYMMGREGVGYTDSRSYYLFPRTSGYVSPRF.

2 C2H2-type zinc fingers span residues 111 to 133 (YKCR…ERIH) and 139 to 161 (YVCG…AAQH). The C2H2-type 3; degenerate zinc finger occupies 166 to 186 (GFKCDCGRTFFSYTEMLYHKH). The C2H2-type 4 zinc finger occupies 244 to 266 (YICEYCSKSYSDSRGLAYHMYSH).

It is found in the nucleus. It localises to the cytoplasm. Functionally, probable transcription factor. Required for muscle structure. Its dual subcellular localization suggests that it may function both as a muscle adhesion complex protein and as a transcription factor, or work together with transcription factors, to influence gene expression. Thought to act as a molecular bridge between unc-97 and mhc-a at the M-line of muscles, possibly in a signaling role. The protein is Zinc finger protein unc-98 of Caenorhabditis briggsae.